The chain runs to 220 residues: MALIFRTAMQSVGLLLSLLGWILSIITTYLPHWKNLNLDLNEMENWTMGLWQTCVIQEEVGMQCKDFDSFLALPAELRVSRILMFLSNGLGFLGLLVSGFGLDCLRIGESQRDLKRRLLILGGILSWASGITALVPVSWVAHKTVQEFWDENVPDFVPRWEFGEALFLGWFAGLSLLLGGCLLNCAACSSHAPLALGHYAVAQMQTQCPYLEDGTADPQV.

Residues 1–10 (MALIFRTAMQ) are Cytoplasmic-facing. Residues 11–31 (SVGLLLSLLGWILSIITTYLP) traverse the membrane as a helical segment. The Extracellular portion of the chain corresponds to 32 to 81 (HWKNLNLDLNEMENWTMGLWQTCVIQEEVGMQCKDFDSFLALPAELRVSR). Residues 82-102 (ILMFLSNGLGFLGLLVSGFGL) traverse the membrane as a helical segment. Over 103-117 (DCLRIGESQRDLKRR) the chain is Cytoplasmic. Residues 118 to 138 (LLILGGILSWASGITALVPVS) form a helical membrane-spanning segment. At 139–161 (WVAHKTVQEFWDENVPDFVPRWE) the chain is on the extracellular side. Residues 162 to 182 (FGEALFLGWFAGLSLLLGGCL) form a helical membrane-spanning segment. Topologically, residues 183-220 (LNCAACSSHAPLALGHYAVAQMQTQCPYLEDGTADPQV) are cytoplasmic.

The protein belongs to the claudin family.

It is found in the cell junction. The protein localises to the tight junction. It localises to the cell membrane. In terms of biological role, plays a major role in tight junction-specific obliteration of the intercellular space, through calcium-independent cell-adhesion activity. This is Claudin-24 from Homo sapiens (Human).